The chain runs to 498 residues: MRINPTTSGPGVSALEKKNLGHIAQIIGPVLDVVFPPGKMPNIYNALVVKGRDTVSQQINVTCEVQQLLGNNRVRAVAMSATEGLMRGMEVIDTGAPLSVPVGGATLGRIFNVLGEPVDDLRPVDTGTTSPIHRSAPAFIQLDTKLSIFETGIKVVDLLAPYRRGGKIGLFGGAGVGKTVLIMELINNIAKAHGGVSVFGGVGERTREGNDLYMEMKESGVINEENIAESKVALVYGQMNEPPGARMRVGLTALTMAEYFRDVNEQDVLLFIDNIFRFVQAGSEVSALLGRMPSAVGYQPTLSTEMGTLQERITSTKEGSITSIQAVYVPADDLTDPAPATTFAHLDATTVLSRGLAAKGIYPAVDPLDSTSTMLQPQIVGEEHYETAQRVKQTLQRYKELQDIIAILGLDELSEEDRLTVARARKIERFLSQPFFVAEVFTGSPGKYVGLAETIRGFKLILSGELDSLPEQAFYLVGNIDEATAKATNLEMENNLKK.

172 to 179 is an ATP binding site; sequence GGAGVGKT.

It belongs to the ATPase alpha/beta chains family. In terms of assembly, F-type ATPases have 2 components, CF(1) - the catalytic core - and CF(0) - the membrane proton channel. CF(1) has five subunits: alpha(3), beta(3), gamma(1), delta(1), epsilon(1). CF(0) has four main subunits: a(1), b(1), b'(1) and c(9-12).

The protein resides in the plastid. The protein localises to the chloroplast thylakoid membrane. It carries out the reaction ATP + H2O + 4 H(+)(in) = ADP + phosphate + 5 H(+)(out). Its function is as follows. Produces ATP from ADP in the presence of a proton gradient across the membrane. The catalytic sites are hosted primarily by the beta subunits. The polypeptide is ATP synthase subunit beta, chloroplastic (Populus tremuloides (Quaking aspen)).